The primary structure comprises 196 residues: uncharacterized protein (196 aa).

A disordered region spans residues Met1–Glu21.

This is an uncharacterized protein from Mus musculus (Mouse).